Consider the following 175-residue polypeptide: Urease accessory protein UreE (175 aa).

The segment at 134–175 (FQPESGAYGGGHHHGDESATDLHNPGHGPHRSVPKIHEFKPR) is disordered.

The protein belongs to the UreE family.

The protein localises to the cytoplasm. Functionally, involved in urease metallocenter assembly. Binds nickel. Probably functions as a nickel donor during metallocenter assembly. The polypeptide is Urease accessory protein UreE (Dechloromonas aromatica (strain RCB)).